A 331-amino-acid polypeptide reads, in one-letter code: Fructose-1,6-bisphosphatase class 1 (331 aa).

4 residues coordinate Mg(2+): Glu80, Asp98, Leu100, and Asp101. Substrate contacts are provided by residues 101-104 (DGSS) and Asn189. Glu261 contributes to the Mg(2+) binding site.

It belongs to the FBPase class 1 family. As to quaternary structure, homotetramer. Mg(2+) is required as a cofactor.

It localises to the cytoplasm. It catalyses the reaction beta-D-fructose 1,6-bisphosphate + H2O = beta-D-fructose 6-phosphate + phosphate. Its pathway is carbohydrate biosynthesis; gluconeogenesis. The protein is Fructose-1,6-bisphosphatase class 1 of Rhodobacter capsulatus (strain ATCC BAA-309 / NBRC 16581 / SB1003).